The following is a 404-amino-acid chain: Glucose-1-phosphate adenylyltransferase (404 aa).

Residues Tyr99, Gly164, 179 to 180 (EK), and Ser197 each bind alpha-D-glucose 1-phosphate.

Belongs to the bacterial/plant glucose-1-phosphate adenylyltransferase family.

The catalysed reaction is alpha-D-glucose 1-phosphate + ATP + H(+) = ADP-alpha-D-glucose + diphosphate. It functions in the pathway glycan biosynthesis; glycogen biosynthesis. In terms of biological role, involved in the biosynthesis of ADP-glucose, a building block, required in the biosynthesis of maltose-1-phosphate (M1P) and in the elongation reactions to produce linear alpha-1,4-glucans. Catalyzes the reaction between ATP and alpha-D-glucose 1-phosphate (G1P) to produce pyrophosphate and ADP-Glc. This is Glucose-1-phosphate adenylyltransferase from Mycolicibacterium gilvum (strain PYR-GCK) (Mycobacterium gilvum (strain PYR-GCK)).